A 1098-amino-acid polypeptide reads, in one-letter code: Platelet-derived growth factor receptor beta (1098 aa).

A signal peptide spans 1–31 (MGLPGVIPALVLRGQLLLSVLWLLGPQTSRG). The Extracellular portion of the chain corresponds to 32-531 (LVITPPGPEF…VVPHSLPFKV (500 aa)). Ig-like C2-type domains are found at residues 33–119 (VITP…YIFV), 128–209 (PMDS…YSLQ), 213–308 (INVS…INIS), 330–402 (HRSR…HEDD), and 415–523 (PVRV…VTVV). N-linked (GlcNAc...) asparagine glycosylation is found at Asn-44, Asn-88, and Asn-102. A disulfide bridge connects residues Cys-53 and Cys-99. A disulfide bridge connects residues Cys-148 and Cys-189. N-linked (GlcNAc...) asparagine glycosylation occurs at Asn-214. Residues Cys-234 and Cys-290 are joined by a disulfide bond. Residues Asn-291, Asn-306, Asn-353, Asn-370, Asn-444, Asn-467, and Asn-478 are each glycosylated (N-linked (GlcNAc...) asparagine). Cys-435 and Cys-507 are oxidised to a cystine. The chain crosses the membrane as a helical span at residues 532-552 (VVISAILALVVLTVISLIILI). At 553–1098 (MLWQKKPRYE…PLAEAEDSFL (546 aa)) the chain is on the cytoplasmic side. 3 positions are modified to phosphotyrosine; by autocatalysis: Tyr-561, Tyr-578, and Tyr-580. Residues 599–961 (LVLGRTLGSG…QLVLLLERLL (363 aa)) enclose the Protein kinase domain. ATP contacts are provided by residues 605–613 (LGSGAFGQV) and Lys-633. Residue Tyr-685 is modified to Phosphotyrosine; by ABL1 and ABL2. A phosphotyrosine; by autocatalysis mark is found at Tyr-715, Tyr-739, Tyr-750, Tyr-762, Tyr-770, Tyr-774, and Tyr-777. Asp-825 acts as the Proton acceptor in catalysis. Tyr-856 is subject to Phosphotyrosine; by autocatalysis. A phosphotyrosine; by ABL1 and ABL2 mark is found at Tyr-933 and Tyr-969. Residues Tyr-1008 and Tyr-1020 each carry the phosphotyrosine; by autocatalysis modification. Positions 1016 to 1098 (SDNDYIIPLP…PLAEAEDSFL (83 aa)) are disordered. Over residues 1042-1059 (SLASSTLNEVNTSSTISC) the composition is skewed to polar residues. A compositionally biased stretch (low complexity) spans 1062–1082 (PLELQEEPQQAEPEAQLEQPQ).

This sequence belongs to the protein kinase superfamily. Tyr protein kinase family. CSF-1/PDGF receptor subfamily. Interacts with homodimeric PDGFB and PDGFD, and with heterodimers formed by PDGFA and PDGFB. May also interact with homodimeric PDGFC. Monomer in the absence of bound ligand. Interaction with homodimeric PDGFB, heterodimers formed by PDGFA and PDGFB or homodimeric PDGFD, leads to receptor dimerization, where both PDGFRA homodimers and heterodimers with PDGFRB are observed. Interacts with SH2B2/APS. Interacts directly (tyrosine phosphorylated) with SHB. Interacts (tyrosine phosphorylated) with PIK3R1 and RASA1. Interacts (tyrosine phosphorylated) with CBL. Interacts (tyrosine phosphorylated) with SRC and SRC family kinases. Interacts (tyrosine phosphorylated) with PIK3C2B, maybe indirectly. Interacts (tyrosine phosphorylated) with SHC1, GRB7, GRB10 and NCK1. Interaction with GRB2 is mediated by SHC1. Interacts (via C-terminus) with NHERF1. In terms of processing, autophosphorylated on tyrosine residues upon ligand binding. Autophosphorylation occurs in trans, i.e. one subunit of the dimeric receptor phosphorylates tyrosine residues on the other subunit. Phosphorylation at Tyr-578, and to a lesser degree, Tyr-580 is important for interaction with SRC. Phosphorylation at Tyr-715 is important for interaction with GRB2. Phosphorylation at Tyr-739 and Tyr-750 is important for interaction with PIK3R1. Phosphorylation at Tyr-750 is important for interaction with NCK1. Phosphorylation at Tyr-770 and Tyr-856 is important for interaction with RASA1/GAP. Phosphorylation at Tyr-856 is important for efficient phosphorylation of PLCG1 and PTPN11, resulting in increased phosphorylation of AKT1, MAPK1/ERK2 and/or MAPK3/ERK1, PDCD6IP/ALIX and STAM, and in increased cell proliferation. Phosphorylation at Tyr-1008 is important for interaction with PTPN11. Phosphorylation at Tyr-1008 and Tyr-1020 is important for interaction with PLCG1. Dephosphorylated by PTPRJ at Tyr-750, Tyr-856, Tyr-1008 and Tyr-1020. Dephosphorylated by PTPN2 at Tyr-578 and Tyr-1020. Post-translationally, N-glycosylated. Ubiquitinated. After autophosphorylation, the receptor is polyubiquitinated, leading to its degradation. In terms of tissue distribution, weakly expressed in glomerular mesangial cells and interstitial cells. Up-regulated in areas of renal fibrosis. In mice with unilateral ureteral obstruction, increased expression in interstitial cells at day 4 and expression is markedly elevated at day 7 and is maximal at day 14.

The protein localises to the cell membrane. It localises to the cytoplasmic vesicle. The protein resides in the lysosome lumen. It carries out the reaction L-tyrosyl-[protein] + ATP = O-phospho-L-tyrosyl-[protein] + ADP + H(+). Present in an inactive conformation in the absence of bound ligand. Binding of PDGFB and/or PDGFD leads to dimerization and activation by autophosphorylation on tyrosine residues. Functionally, tyrosine-protein kinase that acts as a cell-surface receptor for homodimeric PDGFB and PDGFD and for heterodimers formed by PDGFA and PDGFB, and plays an essential role in the regulation of embryonic development, cell proliferation, survival, differentiation, chemotaxis and migration. Plays an essential role in blood vessel development by promoting proliferation, migration and recruitment of pericytes and smooth muscle cells to endothelial cells. Plays a role in the migration of vascular smooth muscle cells and the formation of neointima at vascular injury sites. Required for normal development of the cardiovascular system. Required for normal recruitment of pericytes (mesangial cells) in the kidney glomerulus, and for normal formation of a branched network of capillaries in kidney glomeruli. Promotes rearrangement of the actin cytoskeleton and the formation of membrane ruffles. Binding of its cognate ligands - homodimeric PDGFB, heterodimers formed by PDGFA and PDGFB or homodimeric PDGFD -leads to the activation of several signaling cascades; the response depends on the nature of the bound ligand and is modulated by the formation of heterodimers between PDGFRA and PDGFRB. Phosphorylates PLCG1, PIK3R1, PTPN11, RASA1/GAP, CBL, SHC1 and NCK1. Activation of PLCG1 leads to the production of the cellular signaling molecules diacylglycerol and inositol 1,4,5-trisphosphate, mobilization of cytosolic Ca(2+) and the activation of protein kinase C. Phosphorylation of PIK3R1, the regulatory subunit of phosphatidylinositol 3-kinase, leads to the activation of the AKT1 signaling pathway. Phosphorylation of SHC1, or of the C-terminus of PTPN11, creates a binding site for GRB2, resulting in the activation of HRAS, RAF1 and down-stream MAP kinases, including MAPK1/ERK2 and/or MAPK3/ERK1. Promotes phosphorylation and activation of SRC family kinases. Promotes phosphorylation of PDCD6IP/ALIX and STAM. Receptor signaling is down-regulated by protein phosphatases that dephosphorylate the receptor and its down-stream effectors, and by rapid internalization of the activated receptor. The protein is Platelet-derived growth factor receptor beta (Pdgfrb) of Mus musculus (Mouse).